We begin with the raw amino-acid sequence, 398 residues long: Isochorismate synthase DhbC (398 aa).

Ser271 bears the Phosphoserine mark.

This sequence belongs to the isochorismate synthase family.

It catalyses the reaction chorismate = isochorismate. It functions in the pathway siderophore biosynthesis; bacillibactin biosynthesis. This Bacillus subtilis (strain 168) protein is Isochorismate synthase DhbC (dhbC).